Consider the following 367-residue polypeptide: D-alanine--D-alanine ligase (367 aa).

Residues 145 to 351 (KRLLRDAGLP…QPALMDALIA (207 aa)) enclose the ATP-grasp domain. Residue 174–229 (HAVGCSELFIKPANLGSSVGISKARTPQEFAAACDLALRFDGKILIERCISPVREI) participates in ATP binding. The Mg(2+) site is built by aspartate 306, glutamate 318, and asparagine 320.

The protein belongs to the D-alanine--D-alanine ligase family. The cofactor is Mg(2+). Mn(2+) is required as a cofactor.

Its subcellular location is the cytoplasm. It catalyses the reaction 2 D-alanine + ATP = D-alanyl-D-alanine + ADP + phosphate + H(+). It participates in cell wall biogenesis; peptidoglycan biosynthesis. Cell wall formation. The chain is D-alanine--D-alanine ligase from Bradyrhizobium sp. (strain BTAi1 / ATCC BAA-1182).